Here is a 505-residue protein sequence, read N- to C-terminus: Cholesteryl ester transfer protein (505 aa).

The N-terminal stretch at 1–24 is a signal peptide; it reads MLWAGGMRLGMARILLMLVHAAAA. Asparagine 68 and asparagine 114 each carry an N-linked (GlcNAc...) asparagine glycan. Cysteine 169 and cysteine 210 are oxidised to a cystine. 3 N-linked (GlcNAc...) asparagine glycosylation sites follow: asparagine 266, asparagine 344, and asparagine 422.

The protein belongs to the BPI/LBP/Plunc superfamily. BPI/LBP family. In terms of tissue distribution, highly expressed in liver brain, heart, and spleen. Secreted in plasma.

The protein resides in the secreted. It carries out the reaction cholesteryl (9Z-octadecenoate)(in) = cholesteryl (9Z-octadecenoate)(out). The enzyme catalyses 1,2,3-tri-(9Z-octadecenoyl)-glycerol(in) = 1,2,3-tri-(9Z-octadecenoyl)-glycerol(out). The catalysed reaction is cholesteryl (9Z,12Z)-octadecadienoate(in) = cholesteryl (9Z,12Z)-octadecadienoate(out). Its function is as follows. Involved in the transfer of neutral lipids, including cholesteryl ester and triglyceride, among lipoprotein particles. Allows the net movement of cholesteryl ester from high density lipoproteins/HDL to triglyceride-rich very low density lipoproteins/VLDL, and the equimolar transport of triglyceride from VLDL to HDL. Regulates the reverse cholesterol transport, by which excess cholesterol is removed from peripheral tissues and returned to the liver for elimination. The sequence is that of Cholesteryl ester transfer protein from Gallus gallus (Chicken).